Reading from the N-terminus, the 835-residue chain is Protein P (835 aa).

The segment at 1–176 (MPLSYQHFRK…FFGTPYTWEH (176 aa)) is terminal protein domain (TP). Residues 177-334 (KLQHGTQPVN…HCLHHIVKLL (158 aa)) form a spacer region. 2 disordered regions span residues 211–235 (LGQKSKQGPLATSPRHGSGGLWSRT) and 258–288 (RHPSSSINQSRQRKETNTSYSSSERHSPTSH). The polymerase/reverse transcriptase domain (RT) stretch occupies residues 335–680 (DDWGPCQHHG…YMHLYPVARQ (346 aa)). A Reverse transcriptase domain is found at 345–590 (HHFIRIPRTP…KALNFMGYVI (246 aa)). Positions 417, 541, and 542 each coordinate Mg(2+).

Belongs to the hepadnaviridae P protein family.

It carries out the reaction DNA(n) + a 2'-deoxyribonucleoside 5'-triphosphate = DNA(n+1) + diphosphate. The catalysed reaction is Endonucleolytic cleavage to 5'-phosphomonoester.. Activated by host HSP70 and HSP40 in vitro to be able to bind the epsilon loop of the pgRNA. Because deletion of the RNase H region renders the protein partly chaperone-independent, the chaperones may be needed indirectly to relieve occlusion of the RNA-binding site by this domain. Inhibited by several reverse-transcriptase inhibitors: Lamivudine, Adefovir and Entecavir. In terms of biological role, multifunctional enzyme that converts the viral RNA genome into dsDNA in viral cytoplasmic capsids. This enzyme displays a DNA polymerase activity that can copy either DNA or RNA templates, and a ribonuclease H (RNase H) activity that cleaves the RNA strand of RNA-DNA heteroduplexes in a partially processive 3'- to 5'-endonucleasic mode. Neo-synthesized pregenomic RNA (pgRNA) are encapsidated together with the P protein, and reverse-transcribed inside the nucleocapsid. Initiation of reverse-transcription occurs first by binding the epsilon loop on the pgRNA genome, and is initiated by protein priming, thereby the 5'-end of (-)DNA is covalently linked to P protein. Partial (+)DNA is synthesized from the (-)DNA template and generates the relaxed circular DNA (RC-DNA) genome. After budding and infection, the RC-DNA migrates in the nucleus, and is converted into a plasmid-like covalently closed circular DNA (cccDNA). The activity of P protein does not seem to be necessary for cccDNA generation, and is presumably released from (+)DNA by host nuclear DNA repair machinery. The chain is Protein P from Woolly monkey hepatitis B virus (isolate Louisville) (WMHBV).